The primary structure comprises 391 residues: Multidrug resistance protein MdtL (391 aa).

12 helical membrane passes run 4–24 (FLICSFALVLLYPAGIDMYLV), 42–62 (IAFSVYLAGMAAAMLFAGKVA), 69–89 (PVAIPGAALFIIASVFCSLAE), 93–113 (LFLAGRFLQGLGAGCCYVVAF), 131–151 (LLNGITCIIPVLAPVLGHLIM), 158–178 (SLFWTMATMGIAVLMLSLFIL), 203–222 (FFLSRVVITTLSVSVILTFV), 245–265 (ALTAGVSMTVSFSTPFALGIF), 269–289 (TLMITSQVLFLAAGITLAVSP), 293–313 (VSLFGITLICAGFSVGFGVAM), 331–351 (LGIAQVCGSSLWIWLAAVVGI), and 356–376 (MLIGILIACSIVSLLLIMFVA).

It belongs to the major facilitator superfamily. DHA1 family. MdtL (TC 2.A.1.2.22) subfamily.

The protein resides in the cell inner membrane. Functionally, confers resistance to chloramphenicol. This chain is Multidrug resistance protein MdtL, found in Escherichia coli O127:H6 (strain E2348/69 / EPEC).